A 553-amino-acid polypeptide reads, in one-letter code: Arginine--tRNA ligase (553 aa).

A 'HIGH' region motif is present at residues 130–140 (ANPTGDLHIGH).

The protein belongs to the class-I aminoacyl-tRNA synthetase family. In terms of assembly, monomer.

The protein localises to the cytoplasm. It catalyses the reaction tRNA(Arg) + L-arginine + ATP = L-arginyl-tRNA(Arg) + AMP + diphosphate. This is Arginine--tRNA ligase from Staphylococcus epidermidis (strain ATCC 12228 / FDA PCI 1200).